The primary structure comprises 956 residues: MSSERRPELEETAVDPATGSAASRKFSIVQDAVETTIVAPTNHGPSPRFSTLVRNLFEPLVNLSAVVAALRKKPTEAKAHIASQFIKGWVEEVGKDIYPAFRLILPDKDRERAVYGLKEKALGRLWVKVLNLAKDSPDAKALSEWKQGGNESAGNFSKRCYEVLSKRTSLTDYGHMTVDEVNERLDLLADGETDQAKQIEILTYFYKHMNATELKWLVNIILRQMKMNATEKVFFEPWHPDAESLFNVTASLKRVCWELTDPTKRLTSAEAQVSLFACFMPQIAAFPKYSGQDIAGKHFKGRPFYIEEKIDGERMQMHMSEYGNKFHWWSRRSKDFTETYGNSLDDASGSLTKRLRGIINPKVRNCVLDGEMVAYDPATKKIIPFGTLRTANRNEQNDLNLTKPMFMVFDILLLNDKPLVDYTLAERKRTLRTIFARTDNETVGQEGVLEVLPYTEATTAAEIETCMRKIIAESSEGLVIKDPTSVYRVNTRDDSWLKMKPEYMSEFGEKLDVVIIGGYYGSGKRGSILSSYLCGLRADGSDQFWSFFKVGGGLTAGDYQAIRTKTEGKWKRWDKNDKPKNVLLAGPNGDLERPDVWIEPSDSVVVEVKAASVVASDQYKVGLCLRFPRFRALRLDKTWEDGLTISQFAELRQTVEMEAENKELELEDRKRRNAGPGRGAKRLKLANVSSDEDELGTDERPTSVFKATSFAVLSDMSSPRYMSKAAVENLIKKHGGTVFQTVEGPHTIPVADTRTIKVQALTKRVHGVDVIRPNWLLDCINEEKLVALEPRNLLESSAETLALAKTNVDEFGDSYTRPLTYKEMQEVLRFMDQFDLDQTNPPDLMMEVLETNDGAVPKGMLFYGKKVYMSTSNMDTVALETQFRAYDALRCLQFGGANLVTDMKDLVVAVAKTEEEAKELRRVSSEQVFPFRVVSIKWVEESWKNGTVEIEDDYPL.

ATP-binding residues include Glu-307, Lys-309, Ile-310, Arg-314, Glu-371, Phe-409, Glu-476, Lys-481, Lys-498, and Lys-500. The active-site N6-AMP-lysine intermediate is the Lys-309. Glu-371 contributes to the Mg(2+) binding site. Glu-476 lines the Mg(2+) pocket. Residues 666 to 700 form a disordered region; it reads LEDRKRRNAGPGRGAKRLKLANVSSDEDELGTDER. 2 BRCT domains span residues 700-793 and 857-956; these read RPTS…PRNL and PKGM…DYPL.

This sequence belongs to the ATP-dependent DNA ligase family. Mg(2+) serves as cofactor.

The protein resides in the nucleus. It carries out the reaction ATP + (deoxyribonucleotide)n-3'-hydroxyl + 5'-phospho-(deoxyribonucleotide)m = (deoxyribonucleotide)n+m + AMP + diphosphate.. Functionally, DNA ligase involved in DNA non-homologous end joining (NHEJ); required for double-strand break (DSB) repair. The protein is DNA ligase 4 (LIG4) of Yarrowia lipolytica (strain CLIB 122 / E 150) (Yeast).